The primary structure comprises 575 residues: Arginine--tRNA ligase (575 aa).

The 'HIGH' region signature appears at 122–132 (PNVAKEMHVGH).

Belongs to the class-I aminoacyl-tRNA synthetase family. Monomer.

It localises to the cytoplasm. It carries out the reaction tRNA(Arg) + L-arginine + ATP = L-arginyl-tRNA(Arg) + AMP + diphosphate. This chain is Arginine--tRNA ligase, found in Actinobacillus succinogenes (strain ATCC 55618 / DSM 22257 / CCUG 43843 / 130Z).